The primary structure comprises 377 residues: Probable isocitrate dehydrogenase [NAD] subunit alpha, mitochondrial (377 aa).

R131, R141, R162, and D249 together coordinate substrate. Positions 249, 273, and 277 each coordinate Mg(2+).

Belongs to the isocitrate and isopropylmalate dehydrogenases family. As to quaternary structure, heterooligomer of subunits alpha, beta, and gamma in the apparent ratio of 2:1:1. Requires Mg(2+) as cofactor. Mn(2+) serves as cofactor.

It localises to the mitochondrion. The catalysed reaction is D-threo-isocitrate + NAD(+) = 2-oxoglutarate + CO2 + NADH. Its function is as follows. Probable catalytic subunit of the enzyme which catalyzes the decarboxylation of isocitrate (ICT) into alpha-ketoglutarate. The chain is Probable isocitrate dehydrogenase [NAD] subunit alpha, mitochondrial from Drosophila melanogaster (Fruit fly).